We begin with the raw amino-acid sequence, 373 residues long: Flagellar P-ring protein (373 aa).

The signal sequence occupies residues 1 to 28 (MPSVSAVILKLAAAALSALLLSGVAANA).

Belongs to the FlgI family. The basal body constitutes a major portion of the flagellar organelle and consists of four rings (L,P,S, and M) mounted on a central rod.

Its subcellular location is the periplasm. The protein resides in the bacterial flagellum basal body. Functionally, assembles around the rod to form the L-ring and probably protects the motor/basal body from shearing forces during rotation. In Rhodopseudomonas palustris (strain HaA2), this protein is Flagellar P-ring protein.